The following is a 473-amino-acid chain: Argininosuccinate lyase (473 aa).

It belongs to the lyase 1 family. Argininosuccinate lyase subfamily.

The protein resides in the cytoplasm. The enzyme catalyses 2-(N(omega)-L-arginino)succinate = fumarate + L-arginine. It functions in the pathway amino-acid biosynthesis; L-arginine biosynthesis; L-arginine from L-ornithine and carbamoyl phosphate: step 3/3. In Mycobacteroides abscessus (strain ATCC 19977 / DSM 44196 / CCUG 20993 / CIP 104536 / JCM 13569 / NCTC 13031 / TMC 1543 / L948) (Mycobacterium abscessus), this protein is Argininosuccinate lyase.